A 415-amino-acid polypeptide reads, in one-letter code: Corticotropin-releasing factor receptor 1 (415 aa).

An N-terminal signal peptide occupies residues M1 to A23. Topologically, residues S24–K111 are extracellular. Disulfide bonds link C30-C54, C44-C87, and C68-C102. N-linked (GlcNAc...) asparagine glycosylation is found at N38, N45, N51, N78, N90, and N98. Residues H99–E108 are important for peptide agonist binding. The helical transmembrane segment at S112 to L142 threads the bilayer. The Cytoplasmic segment spans residues R143–C149. The chain crosses the membrane as a helical span at residues V150 to L174. Over T175–R189 the chain is Extracellular. An intrachain disulfide couples C188 to C258. A helical transmembrane segment spans residues L190–V218. The Cytoplasmic segment spans residues L219–R225. A helical membrane pass occupies residues L226–Y253. The Extracellular portion of the chain corresponds to D254–D269. The chain crosses the membrane as a helical span at residues Y270 to M295. Residues L280–I290 are important for antagonist binding. The Cytoplasmic portion of the chain corresponds to T296–T306. S301 bears the Phosphoserine; by PKA mark. Residues I307–F331 form a helical membrane-spanning segment. At V332–E338 the chain is on the extracellular side. Residues V339–S368 traverse the membrane as a helical segment. At E369–V415 the chain is on the cytoplasmic side.

This sequence belongs to the G-protein coupled receptor 2 family. Heterodimer; heterodimerizes with GPER1. Interacts (via N-terminal extracellular domain) with CRH and UCN. Interacts with DLG1; this inhibits endocytosis of CRHR1 after agonist binding. C-terminal Ser or Thr residues may be phosphorylated. In terms of processing, phosphorylation at Ser-301 by PKA prevents maximal coupling to Gq-protein, and thereby negatively regulates downstream signaling.

Its subcellular location is the cell membrane. The protein resides in the endosome. In terms of biological role, G-protein coupled receptor for CRH (corticotropin-releasing factor) and UCN (urocortin). Has high affinity for CRH and UCN. Ligand binding causes a conformation change that triggers signaling via guanine nucleotide-binding proteins (G proteins) and down-stream effectors, such as adenylate cyclase. Promotes the activation of adenylate cyclase, leading to increased intracellular cAMP levels. Inhibits the activity of the calcium channel CACNA1H. Required for normal embryonic development of the adrenal gland and for normal hormonal responses to stress. Plays a role in the response to anxiogenic stimuli. This chain is Corticotropin-releasing factor receptor 1 (CRHR1), found in Ovis aries (Sheep).